The sequence spans 484 residues: Chromosomal replication initiator protein DnaA (484 aa).

The segment at 1-73 is domain I, interacts with DnaA modulators; sequence MQEGKNIWSL…EILIEKGHST (73 aa). Positions 73 to 140 are domain II; sequence TINVEFIHSQ…EEIHIKYRNP (68 aa). Residues 141-357 form a domain III, AAA+ region region; sequence FLKKKYTFEN…AAVTKLKAHI (217 aa). Residues G185, G187, K188, and T189 each contribute to the ATP site. The interval 358 to 484 is domain IV, binds dsDNA; it reads DLEDIEIDTN…IELMNKINKN (127 aa).

It belongs to the DnaA family. In terms of assembly, oligomerizes as a right-handed, spiral filament on DNA at oriC.

It localises to the cytoplasm. In terms of biological role, plays an essential role in the initiation and regulation of chromosomal replication. ATP-DnaA binds to the origin of replication (oriC) to initiate formation of the DNA replication initiation complex once per cell cycle. Binds the DnaA box (a 9 base pair repeat at the origin) and separates the double-stranded (ds)DNA. Forms a right-handed helical filament on oriC DNA; dsDNA binds to the exterior of the filament while single-stranded (ss)DNA is stabiized in the filament's interior. The ATP-DnaA-oriC complex binds and stabilizes one strand of the AT-rich DNA unwinding element (DUE), permitting loading of DNA polymerase. After initiation quickly degrades to an ADP-DnaA complex that is not apt for DNA replication. Binds acidic phospholipids. The chain is Chromosomal replication initiator protein DnaA from Borrelia recurrentis (strain A1).